We begin with the raw amino-acid sequence, 259 residues long: MKDEKPLILVTNDDGILAPGIRALISVMETIGDVVVVAPDKPQSAMGHAITINNTLFLDKISKDDDTITEYSCSGTPVDCVKLAVNEILKRKPDLCVSGINHGSNSSINVIYSGTMSAAVEAGIEGIQAIGFSLLDFDWNADFEPAKAFVKKITLETLKNKLPPGVVLNVNFPKLSEKEIKGIKVCRQAKAYYAQKFDKRQTPFGKDYYWLTGKFTNEDNGEDTDEWALENGYISVVPVQFDLTAHHTMQQLNTWKLNG.

Asp13, Asp14, Ser44, and Asn101 together coordinate a divalent metal cation.

The protein belongs to the SurE nucleotidase family. A divalent metal cation serves as cofactor.

It is found in the cytoplasm. It carries out the reaction a ribonucleoside 5'-phosphate + H2O = a ribonucleoside + phosphate. Nucleotidase that shows phosphatase activity on nucleoside 5'-monophosphates. This chain is 5'-nucleotidase SurE, found in Flavobacterium johnsoniae (strain ATCC 17061 / DSM 2064 / JCM 8514 / BCRC 14874 / CCUG 350202 / NBRC 14942 / NCIMB 11054 / UW101) (Cytophaga johnsonae).